Consider the following 410-residue polypeptide: Transforming growth factor beta-3 proprotein (410 aa).

Residues 1–23 (MHLQRALVVLALLNLATISLSLS) form the signal peptide. Residues Asn72, Asn133, and Asn140 are each glycosylated (N-linked (GlcNAc...) asparagine). A Cell attachment site motif is present at residues 259–261 (RGD). An N5-methylglutamine modification is found at Gln291. 4 disulfides stabilise this stretch: Cys305–Cys314, Cys313–Cys376, Cys342–Cys407, and Cys346–Cys409.

This sequence belongs to the TGF-beta family. Interacts with ASPN. Latency-associated peptide: Homodimer; disulfide-linked. Latency-associated peptide: Interacts with Transforming growth factor beta-3 (TGF-beta-3) chain; interaction is non-covalent and maintains (TGF-beta-3) in a latent state. Latency-associated peptide: Interacts with LRRC32/GARP; leading to regulate activation of TGF-beta-3 and promote epithelial fusion during palate development. Latency-associated peptide: Interacts (via cell attachment site) with integrins, leading to release of the active TGF-beta-3. Transforming growth factor beta-3: Homodimer; disulfide-linked. Transforming growth factor beta-3: Interacts with TGF-beta receptors (TGFBR1 and TGFBR2), leading to signal transduction. In terms of processing, transforming growth factor beta-3 proprotein: The precursor proprotein is cleaved in the Golgi apparatus to form Transforming growth factor beta-3 (TGF-beta-3) and Latency-associated peptide (LAP) chains, which remain non-covalently linked, rendering TGF-beta-3 inactive. Methylated at Gln-291 by N6AMT1. As to expression, expressed in mammary glands with a slight increase in expression prior to lactation and again increasing at the onset of involution, expression peaks at day 3 of involution.

The protein resides in the secreted. It localises to the extracellular space. It is found in the extracellular matrix. In terms of biological role, transforming growth factor beta-3 proprotein: Precursor of the Latency-associated peptide (LAP) and Transforming growth factor beta-3 (TGF-beta-3) chains, which constitute the regulatory and active subunit of TGF-beta-3, respectively. Its function is as follows. Required to maintain the Transforming growth factor beta-3 (TGF-beta-3) chain in a latent state during storage in extracellular matrix. Associates non-covalently with TGF-beta-3 and regulates its activation via interaction with 'milieu molecules', such as LTBP1 and LRRC32/GARP, that control activation of TGF-beta-3. Interaction with integrins results in distortion of the Latency-associated peptide chain and subsequent release of the active TGF-beta-3. Functionally, transforming growth factor beta-3: Multifunctional protein that regulates embryogenesis and cell differentiation and is required in various processes such as secondary palate development. Activation into mature form follows different steps: following cleavage of the proprotein in the Golgi apparatus, Latency-associated peptide (LAP) and Transforming growth factor beta-3 (TGF-beta-3) chains remain non-covalently linked rendering TGF-beta-3 inactive during storage in extracellular matrix. At the same time, LAP chain interacts with 'milieu molecules', such as LTBP1 and LRRC32/GARP that control activation of TGF-beta-3 and maintain it in a latent state during storage in extracellular milieus. TGF-beta-3 is released from LAP by integrins: integrin-binding results in distortion of the LAP chain and subsequent release of the active TGF-beta-3. Once activated following release of LAP, TGF-beta-3 acts by binding to TGF-beta receptors (TGFBR1 and TGFBR2), which transduce signal. This is Transforming growth factor beta-3 proprotein from Mus musculus (Mouse).